The sequence spans 296 residues: GTPase Era (296 aa).

An Era-type G domain is found at 7-174; sequence RAGFVAIVGR…LDEIAAGLPQ (168 aa). The segment at 15–22 is G1; that stretch reads GRPNVGKS. 15 to 22 provides a ligand contact to GTP; that stretch reads GRPNVGKS. Residues 41–45 form a G2 region; it reads QTTRH. The tract at residues 62-65 is G3; it reads DTPG. GTP contacts are provided by residues 62-66 and 123-126; these read DTPGF and SKID. A G4 region spans residues 123 to 126; the sequence is SKID. The segment at 153 to 155 is G5; that stretch reads VSA. One can recognise a KH type-2 domain in the interval 205–281; it reads VGDELPYGCT…HLEIYIKVRK (77 aa).

It belongs to the TRAFAC class TrmE-Era-EngA-EngB-Septin-like GTPase superfamily. Era GTPase family. Monomer.

Its subcellular location is the cytoplasm. It is found in the cell inner membrane. Functionally, an essential GTPase that binds both GDP and GTP, with rapid nucleotide exchange. Plays a role in 16S rRNA processing and 30S ribosomal subunit biogenesis and possibly also in cell cycle regulation and energy metabolism. The protein is GTPase Era of Bordetella parapertussis (strain 12822 / ATCC BAA-587 / NCTC 13253).